The primary structure comprises 197 residues: ATP-dependent Clp protease proteolytic subunit 2 (197 aa).

The active-site Nucleophile is Ser96. Residue His121 is part of the active site.

It belongs to the peptidase S14 family. In terms of assembly, fourteen ClpP subunits assemble into 2 heptameric rings which stack back to back to give a disk-like structure with a central cavity, resembling the structure of eukaryotic proteasomes.

The protein localises to the cytoplasm. The catalysed reaction is Hydrolysis of proteins to small peptides in the presence of ATP and magnesium. alpha-casein is the usual test substrate. In the absence of ATP, only oligopeptides shorter than five residues are hydrolyzed (such as succinyl-Leu-Tyr-|-NHMec, and Leu-Tyr-Leu-|-Tyr-Trp, in which cleavage of the -Tyr-|-Leu- and -Tyr-|-Trp bonds also occurs).. Cleaves peptides in various proteins in a process that requires ATP hydrolysis. Has a chymotrypsin-like activity. Plays a major role in the degradation of misfolded proteins. The sequence is that of ATP-dependent Clp protease proteolytic subunit 2 from Parasynechococcus marenigrum (strain WH8102).